A 407-amino-acid polypeptide reads, in one-letter code: Protease ElaD (407 aa).

His-231 is a catalytic residue. The active-site Nucleophile is Cys-317.

The protein belongs to the peptidase C79 family.

Functionally, protease that can act as an efficient and specific deubiquitinating enzyme in vitro. Does not possess desumoylating and deneddylating activities. The physiological substrate is unknown. The polypeptide is Protease ElaD (elaD) (Escherichia coli O157:H7).